Consider the following 426-residue polypeptide: MTKFETVRGMKDYIGIDAEKIRYLESTFRDLAIKYGYSEIITPVVEEFKLFALKGGEELRETMYVFKDKADRELSLRPEITPSVARAYIQNLQSSPKPIRLFYFGTVYRYDEPQYGRYREFRQAGIEMIGDSSILADLEVLDLLYNFYDKLNLSNDITIKINNIGIFRKIMDKYNIEDNLQEHILHLIDKNKINEALDILEKNLKNKDIIDFFYKILTKKDTKLEDIESLAELEEVSRLDIKSEFLYLFRLSRILSDLNIKFKIDLGFVRGLAYYTGLIFEVLHPSVQFSIAGGGRYDKLIELYGGLPSPAIGFAIGVERTLLVIKDLKVEEPVNVIVIGMSEDTIPSMFMVSRILRKEEYKVVINTKDQPLSKLLPYYASQGFKVAIIIGKQELEKNMITVRNLITRKQISVPLENIEDAIKQTL.

This sequence belongs to the class-II aminoacyl-tRNA synthetase family.

The protein resides in the cytoplasm. It carries out the reaction tRNA(His) + L-histidine + ATP = L-histidyl-tRNA(His) + AMP + diphosphate + H(+). The protein is Histidine--tRNA ligase of Saccharolobus islandicus (strain Y.N.15.51 / Yellowstone #2) (Sulfolobus islandicus).